A 343-amino-acid chain; its full sequence is Histone H1.8 (343 aa).

A compositionally biased stretch (low complexity) spans 1 to 32 (MAPGSIASSDTSSSTSSSSTSSASSASAEGSS). Disordered stretches follow at residues 1 to 50 (MAPG…VRAP) and 122 to 343 (ATGS…EAEG). The 79-residue stretch at 52-130 (RHPPVLRMVL…GATGSFKLVP (79 aa)) folds into the H15 domain. Positions 132–142 (DKRKIPPRKTA) are enriched in basic residues. Basic and acidic residues-rich tracts occupy residues 150 to 183 (EGKD…ERAA), 199 to 219 (QTKD…RPDK), and 235 to 247 (KVKE…ADTK). Positions 161–176 (KKDPANTVEVKKGSRK) match the Nuclear localization signal motif. Residues 253 to 265 (QPGSQSSKSTVTK) are compositionally biased toward polar residues.

The protein belongs to the histone H1/H5 family. As to expression, oocyte (at protein level).

It localises to the cytoplasm. The protein localises to the nucleus. The protein resides in the chromosome. In terms of biological role, may play a key role in the control of gene expression during oogenesis and early embryogenesis, presumably through the perturbation of chromatin structure. Essential for meiotic maturation of germinal vesicle-stage oocytes. The somatic type linker histone H1c is rapidly replaced by H1oo in a donor nucleus transplanted into an oocyte. The greater mobility of H1oo as compared to H1c may contribute to this rapid replacement and increased instability of the embryonic chromatin structure. The rapid replacement of H1c with H1oo may play an important role in nuclear remodeling. The chain is Histone H1.8 from Bos taurus (Bovine).